The primary structure comprises 207 residues: LPS-assembly lipoprotein LptE (207 aa).

The first 19 residues, 1-19 (MRHRILMLLLGLAVLVTAG), serve as a signal peptide directing secretion. C20 carries the N-palmitoyl cysteine lipid modification. C20 is lipidated: S-diacylglycerol cysteine.

Belongs to the LptE lipoprotein family. Component of the lipopolysaccharide transport and assembly complex. Interacts with LptD.

It localises to the cell outer membrane. Together with LptD, is involved in the assembly of lipopolysaccharide (LPS) at the surface of the outer membrane. Required for the proper assembly of LptD. Binds LPS and may serve as the LPS recognition site at the outer membrane. This Yersinia enterocolitica serotype O:8 / biotype 1B (strain NCTC 13174 / 8081) protein is LPS-assembly lipoprotein LptE.